The chain runs to 144 residues: Large ribosomal subunit protein uL16 (144 aa).

It belongs to the universal ribosomal protein uL16 family. Part of the 50S ribosomal subunit.

Its function is as follows. Binds 23S rRNA and is also seen to make contacts with the A and possibly P site tRNAs. The protein is Large ribosomal subunit protein uL16 of Thermoanaerobacter sp. (strain X514).